The sequence spans 496 residues: Glycerol kinase (496 aa).

T12 is a binding site for ADP. 3 residues coordinate ATP: T12, T13, and S14. Sn-glycerol 3-phosphate is bound at residue T12. R16 contacts ADP. Sn-glycerol 3-phosphate contacts are provided by R82, E83, and Y134. Glycerol contacts are provided by R82, E83, and Y134. A Phosphohistidine; by HPr modification is found at H230. D244 lines the sn-glycerol 3-phosphate pocket. 2 residues coordinate glycerol: D244 and Q245. T266 and G309 together coordinate ADP. The ATP site is built by T266, G309, Q313, and G410. 2 residues coordinate ADP: G410 and N414.

Belongs to the FGGY kinase family. As to quaternary structure, homotetramer and homodimer (in equilibrium). Post-translationally, the phosphoenolpyruvate-dependent sugar phosphotransferase system (PTS), including enzyme I, and histidine-containing protein (HPr) are required for the phosphorylation, which leads to the activation of the enzyme.

It carries out the reaction glycerol + ATP = sn-glycerol 3-phosphate + ADP + H(+). The protein operates within polyol metabolism; glycerol degradation via glycerol kinase pathway; sn-glycerol 3-phosphate from glycerol: step 1/1. Its activity is regulated as follows. Activated by phosphorylation and inhibited by fructose 1,6-bisphosphate (FBP). Its function is as follows. Key enzyme in the regulation of glycerol uptake and metabolism. Catalyzes the phosphorylation of glycerol to yield sn-glycerol 3-phosphate. This is Glycerol kinase from Bacillus subtilis (strain 168).